The primary structure comprises 125 residues: Small ribosomal subunit protein uS13 (125 aa).

The tract at residues 92-125 is disordered; the sequence is RRSLPVRGQRTRTNARTRKGKRKTVAGKKKAVKK.

It belongs to the universal ribosomal protein uS13 family. Part of the 30S ribosomal subunit. Forms a loose heterodimer with protein S19. Forms two bridges to the 50S subunit in the 70S ribosome.

Located at the top of the head of the 30S subunit, it contacts several helices of the 16S rRNA. In the 70S ribosome it contacts the 23S rRNA (bridge B1a) and protein L5 of the 50S subunit (bridge B1b), connecting the 2 subunits; these bridges are implicated in subunit movement. Contacts the tRNAs in the A and P-sites. The polypeptide is Small ribosomal subunit protein uS13 (Pelodictyon phaeoclathratiforme (strain DSM 5477 / BU-1)).